Reading from the N-terminus, the 479-residue chain is Phosphatidylinositol 4-kinase type 2-alpha (479 aa).

Met-1 is subject to N-acetylmethionine. Residues 1-58 (MDETSPLVSPERAQPPEYTFPSGSGAHFPQVPGGAVRVAAAAGSGPSPPCSPGHDRER) are disordered. Phosphoserine is present on residues Ser-5, Ser-9, Ser-44, Ser-47, and Ser-51. The span at 31–45 (VPGGAVRVAAAAGSG) shows a compositional bias: low complexity. A PI3K/PI4K catalytic domain is found at 124–453 (SIYPERIYQG…VQMPPVIVET (330 aa)). The segment at 130–136 (IYQGSSG) is G-loop. Residues 131–137 (YQGSSGS) and Lys-152 contribute to the ATP site. Residues 157–159 (EPY) are important for substrate binding. An important for interaction with membranes region spans residues 165-178 (KWTKWLQKLCCPCC). Residues Cys-174, Cys-175, Cys-177, and Cys-178 are each lipidated (S-palmitoyl cysteine). 261–264 (QLFV) provides a ligand contact to ATP. Residues 268-276 (KDADYWLRR) are important for interaction with membranes. Residues 305-313 (RNTDRGNDN) are catalytic loop. Residues 344-364 (AIDNGLAFPLKHPDSWRAYPF) form an activation loop region. Asp-346 lines the ATP pocket. Residues 359–368 (WRAYPFYWAW) form an important for interaction with membranes region. Residue Ser-462 is modified to Phosphoserine.

This sequence belongs to the PI3/PI4-kinase family. Type II PI4K subfamily. As to quaternary structure, associates with the BLOC-1 and the AP-3 complexes; the BLOC-1 complex is required for optimal binding of PI4K2A to the AP-3 complex. Interacts with BLOC1S5 and DTNBP1. Interacts with ITCH. Interacts with FOS; this interaction may enhance phosphatidylinositol phosphorylation activity. Interacts with ATG9A. Palmitoylated by ZDHHC3 and ZDHHC7 in the CCPCC motif. Palmitoylation is cholesterol-dependent, and required for TGN localization. Post-translationally, ubiquitinated by ITCH; this does not lead to proteasomal degradation. As to expression, detected in brain (at protein level).

The protein resides in the golgi apparatus. It is found in the trans-Golgi network membrane. Its subcellular location is the membrane raft. It localises to the endosome. The protein localises to the endosome membrane. The protein resides in the cytoplasmic vesicle. It is found in the cell projection. Its subcellular location is the dendrite. It localises to the presynaptic cell membrane. The protein localises to the synapse. The protein resides in the synaptosome. It is found in the mitochondrion. Its subcellular location is the membrane. It localises to the cell membrane. The protein localises to the perikaryon. The protein resides in the neuron projection. It catalyses the reaction a 1,2-diacyl-sn-glycero-3-phospho-(1D-myo-inositol) + ATP = a 1,2-diacyl-sn-glycero-3-phospho-(1D-myo-inositol 4-phosphate) + ADP + H(+). Its function is as follows. Membrane-bound phosphatidylinositol-4 kinase (PI4-kinase) that catalyzes the phosphorylation of phosphatidylinositol (PI) to phosphatidylinositol 4-phosphate (PI4P), a lipid that plays important roles in endocytosis, Golgi function, protein sorting and membrane trafficking and is required for prolonged survival of neurons. Besides, phosphorylation of phosphatidylinositol (PI) to phosphatidylinositol 4-phosphate (PI4P) is the first committed step in the generation of phosphatidylinositol 4,5-bisphosphate (PIP2), a precursor of the second messenger inositol 1,4,5-trisphosphate (InsP3). The polypeptide is Phosphatidylinositol 4-kinase type 2-alpha (Pi4k2a) (Mus musculus (Mouse)).